A 741-amino-acid chain; its full sequence is NAD(P)H-quinone oxidoreductase subunit 5, chloroplastic (741 aa).

16 helical membrane passes run 9 to 29 (WIIPFLPLPVPMLIGLGLLLF), 40 to 60 (WAFQSVLLLSIVMIFSINLSI), 89 to 109 (IDPLTSIMSILITTVGILVLI), 125 to 145 (FAYMSFFSTSMLGLVTSSNLI), 147 to 167 (IYIFWELVGMCSYLLIGFWFT), 185 to 205 (GDFGLLLGILGFYWITGSFEF), 219 to 239 (NEVNFFFVTLCAVLLFGGAIA), 258 to 278 (TPISALIRAATMVAAGIFLVA), 283 to 303 (LFIVIPHIMNFISLIGIITVF), 327 to 347 (LGYMMLALGMGSYRSALFHLI), 354 to 374 (ALLFLGSGSVIHSMETLVGYC), 396 to 416 (NSFLLGTLSLCGIPPLACFWS), 425 to 445 (WLYSPIFATIAWSTAGLTAFY), 549 to 569 (LFPILILIIFTLFVGFLGIHF), 605 to 625 (VFSVSIASFGIFIAFFLYKPV), and 721 to 741 (YLFFYFSYVSIFLLIYYFVNL).

The protein belongs to the complex I subunit 5 family. As to quaternary structure, NDH is composed of at least 16 different subunits, 5 of which are encoded in the nucleus.

The protein localises to the plastid. It is found in the chloroplast thylakoid membrane. It catalyses the reaction a plastoquinone + NADH + (n+1) H(+)(in) = a plastoquinol + NAD(+) + n H(+)(out). The enzyme catalyses a plastoquinone + NADPH + (n+1) H(+)(in) = a plastoquinol + NADP(+) + n H(+)(out). NDH shuttles electrons from NAD(P)H:plastoquinone, via FMN and iron-sulfur (Fe-S) centers, to quinones in the photosynthetic chain and possibly in a chloroplast respiratory chain. The immediate electron acceptor for the enzyme in this species is believed to be plastoquinone. Couples the redox reaction to proton translocation, and thus conserves the redox energy in a proton gradient. The protein is NAD(P)H-quinone oxidoreductase subunit 5, chloroplastic (ndhF) of Pentatrichia integra (Rock-climbing daisy).